A 110-amino-acid polypeptide reads, in one-letter code: Iron-sulfur cluster assembly protein CyaY (110 aa).

The protein belongs to the frataxin family.

Its function is as follows. Involved in iron-sulfur (Fe-S) cluster assembly. May act as a regulator of Fe-S biogenesis. This chain is Iron-sulfur cluster assembly protein CyaY, found in Pseudomonas fluorescens (strain Pf0-1).